Here is a 314-residue protein sequence, read N- to C-terminus: Homoserine O-succinyltransferase (314 aa).

Cys142 functions as the Acyl-thioester intermediate in the catalytic mechanism. Residues Lys163 and Ser192 each coordinate substrate. His235 functions as the Proton acceptor in the catalytic mechanism. The active site involves Glu237. Arg249 lines the substrate pocket.

The protein belongs to the MetA family.

It localises to the cytoplasm. The catalysed reaction is L-homoserine + succinyl-CoA = O-succinyl-L-homoserine + CoA. It participates in amino-acid biosynthesis; L-methionine biosynthesis via de novo pathway; O-succinyl-L-homoserine from L-homoserine: step 1/1. Transfers a succinyl group from succinyl-CoA to L-homoserine, forming succinyl-L-homoserine. The chain is Homoserine O-succinyltransferase from Shewanella sediminis (strain HAW-EB3).